A 242-amino-acid polypeptide reads, in one-letter code: Probable ABC transporter ATP-binding protein PEB1C (242 aa).

Residues 2-236 (IELKNVNKYY…PKTERARLFL (235 aa)) form the ABC transporter domain. 34 to 41 (GPSGSGKS) contributes to the ATP binding site.

Belongs to the ABC transporter superfamily.

The protein resides in the cell inner membrane. In terms of biological role, most probably involved, with PEB1, in a binding-protein-dependent transport system for an amino acid. Probably responsible for energy coupling to the transport system. This Campylobacter jejuni subsp. jejuni serotype O:23/36 (strain 81-176) protein is Probable ABC transporter ATP-binding protein PEB1C (peb1C).